Here is a 216-residue protein sequence, read N- to C-terminus: Cobalt-zinc-cadmium resistance protein CzcN (216 aa).

3 helical membrane passes run 27–47 (IGVW…GHSR), 50–70 (GTWV…LATV), and 116–136 (ESLA…PAVI).

The protein to A.xylosoxydans NccN.

Its subcellular location is the cell inner membrane. Component of the CZC cation-efflux system that confers resistance to cobalt, zinc and cadmium. The sequence is that of Cobalt-zinc-cadmium resistance protein CzcN (czcN) from Cupriavidus metallidurans (strain ATCC 43123 / DSM 2839 / NBRC 102507 / CH34) (Ralstonia metallidurans).